The following is a 143-amino-acid chain: Large ribosomal subunit protein uL15 (143 aa).

The disordered stretch occupies residues 1-54; that stretch reads MELNSIKPAEGAKHAKRRVGRGIGSGLGKTAGRGHKGQKSRSGGYHKVGFEGGQ. A compositionally biased stretch (gly residues) spans 21–31; that stretch reads RGIGSGLGKTA.

Belongs to the universal ribosomal protein uL15 family. As to quaternary structure, part of the 50S ribosomal subunit.

Functionally, binds to the 23S rRNA. The sequence is that of Large ribosomal subunit protein uL15 from Paracidovorax citrulli (strain AAC00-1) (Acidovorax citrulli).